We begin with the raw amino-acid sequence, 116 residues long: DSTDGLLVKDKYLCGDLYGEEYGVIFPYLGLKTECLWTIKMDPLYRILLTVRDVHENCNKESLEIIEGPPESSNSRKICDTSHAEYTSCTNTMTVKYTRKPNHPAPDFFLIFRRVL.

2 cysteine pairs are disulfide-bonded: Cys14–Cys35 and Cys58–Cys79. The CUB domain occupies 14–115 (CGDLYGEEYG…PDFFLIFRRV (102 aa)).

The protein belongs to the spermadhesin family. As to quaternary structure, homodimer; disulfide-linked. In terms of tissue distribution, seminal plasma.

It is found in the secreted. In terms of biological role, may be involved in the fertilization process. The protein is Spermadhesin Z13 of Bos taurus (Bovine).